Consider the following 50-residue polypeptide: Large ribosomal subunit protein bL33 (50 aa).

Belongs to the bacterial ribosomal protein bL33 family.

The sequence is that of Large ribosomal subunit protein bL33 from Fusobacterium nucleatum subsp. nucleatum (strain ATCC 25586 / DSM 15643 / BCRC 10681 / CIP 101130 / JCM 8532 / KCTC 2640 / LMG 13131 / VPI 4355).